Reading from the N-terminus, the 1546-residue chain is DNA-directed RNA polymerase subunit beta' (1546 aa).

Residues C57, C59, C72, and C75 each contribute to the Zn(2+) site. Mg(2+) is bound by residues D756, D758, and D760. Residues C1130, C1211, C1218, and C1221 each contribute to the Zn(2+) site. The tract at residues 1512-1546 (LEKYGEGSTSSDAVTGGQRYDDTRPGSSINPGYGD) is disordered. Polar residues predominate over residues 1536 to 1546 (PGSSINPGYGD).

This sequence belongs to the RNA polymerase beta' chain family. The RNAP catalytic core consists of 2 alpha, 1 beta, 1 beta' and 1 omega subunit. When a sigma factor is associated with the core the holoenzyme is formed, which can initiate transcription. Mg(2+) is required as a cofactor. Requires Zn(2+) as cofactor.

It catalyses the reaction RNA(n) + a ribonucleoside 5'-triphosphate = RNA(n+1) + diphosphate. DNA-dependent RNA polymerase catalyzes the transcription of DNA into RNA using the four ribonucleoside triphosphates as substrates. The polypeptide is DNA-directed RNA polymerase subunit beta' (Deinococcus radiodurans (strain ATCC 13939 / DSM 20539 / JCM 16871 / CCUG 27074 / LMG 4051 / NBRC 15346 / NCIMB 9279 / VKM B-1422 / R1)).